The sequence spans 718 residues: Methionine--tRNA ligase (718 aa).

The short motif at P27–H37 is the 'HIGH' region element. Zn(2+) is bound by residues C158, C161, C171, and C174. The short motif at K348–S352 is the 'KMSKS' region element. ATP is bound at residue K351. Positions D612 to K718 constitute a tRNA-binding domain.

The protein belongs to the class-I aminoacyl-tRNA synthetase family. MetG type 1 subfamily. In terms of assembly, homodimer. It depends on Zn(2+) as a cofactor.

Its subcellular location is the cytoplasm. The catalysed reaction is tRNA(Met) + L-methionine + ATP = L-methionyl-tRNA(Met) + AMP + diphosphate. Functionally, is required not only for elongation of protein synthesis but also for the initiation of all mRNA translation through initiator tRNA(fMet) aminoacylation. The sequence is that of Methionine--tRNA ligase from Burkholderia cenocepacia (strain ATCC BAA-245 / DSM 16553 / LMG 16656 / NCTC 13227 / J2315 / CF5610) (Burkholderia cepacia (strain J2315)).